The chain runs to 250 residues: tRNA:m(4)X modification enzyme TRM13 (250 aa).

Basic residues predominate over residues 1 to 10 (MGRAPAKRKP). The interval 1 to 20 (MGRAPAKRKPSSPPPPPPPG) is disordered. Positions 11–20 (SSPPPPPPPG) are enriched in pro residues. A CHHC U11-48K-type zinc finger spans residues 62 to 89 (LVPCPVDPSHTVLEENLEAHVGKCPLKK). Residues C65, H71, H81, and C85 each coordinate Zn(2+).

It belongs to the methyltransferase TRM13 family.

It is found in the nucleus. The protein resides in the cytoplasm. The enzyme catalyses cytidine(4) in tRNA(Pro) + S-adenosyl-L-methionine = 2'-O-methylcytidine(4) in tRNA(Pro) + S-adenosyl-L-homocysteine + H(+). It carries out the reaction cytidine(4) in tRNA(Gly)(GCC) + S-adenosyl-L-methionine = 2'-O-methylcytidine(4) in tRNA(Gly)(GCC) + S-adenosyl-L-homocysteine + H(+). It catalyses the reaction adenosine(4) in tRNA(His) + S-adenosyl-L-methionine = 2'-O-methyladenosine(4) in tRNA(His) + S-adenosyl-L-homocysteine + H(+). In terms of biological role, tRNA methylase that catalyzes 2'-O-methyladenosine (Am) nucleoside formation on tRNA(Gly)(GCC) in vitro. May 2'-O-methylate cytidine(4) in tRNA(Pro) and tRNA(Gly)(GCC), and adenosine(4) in tRNA(His). Involved in salt stress tolerance. In Oryza sativa subsp. japonica (Rice), this protein is tRNA:m(4)X modification enzyme TRM13.